The chain runs to 266 residues: MPTIPSVYRLQQPQMQLNGVAPTHSFSKQYPGLGSTVSGNTSLNNSAICIINAYASGGTLNKKNTTKKNNTVSNNNSVSTTSFFISKPNFSHTNSKVTIQLFYYTASPKNHLVNTSNNDLTTVSSHFSDLSTTLAQLYQKEVHVIATRLYYPYLNSDILSQYLAHNGPSNTFMDFQEAILTNPSLHKTNLPAHISGIKVQVSGRLVTETVIPRITVKSYLIGSFQRNSNNTANKLGDFVTSIDYSKFTTKNELGAFTVKVWICQRS.

It belongs to the universal ribosomal protein uS3 family.

The protein localises to the mitochondrion. This chain is Small ribosomal subunit protein uS3m (MRPS3), found in Mycosarcoma maydis (Corn smut fungus).